The primary structure comprises 331 residues: Holliday junction branch migration complex subunit RuvB (331 aa).

Residues 1–182 (MSNDTLHKYE…FGIPLHLEFY (182 aa)) form a large ATPase domain (RuvB-L) region. ATP is bound by residues Leu-21, Arg-22, Gly-63, Lys-66, Thr-67, Thr-68, 129–131 (EDY), Arg-172, Tyr-182, and Arg-219. Thr-67 contacts Mg(2+). A small ATPAse domain (RuvB-S) region spans residues 183-254 (SVDELVLVIK…FANSALFRLG (72 aa)). Positions 257–331 (GAGFDKMDLK…FEYLLSSKYI (75 aa)) are head domain (RuvB-H). The DNA site is built by Arg-310 and Arg-315.

This sequence belongs to the RuvB family. As to quaternary structure, homohexamer. Forms an RuvA(8)-RuvB(12)-Holliday junction (HJ) complex. HJ DNA is sandwiched between 2 RuvA tetramers; dsDNA enters through RuvA and exits via RuvB. An RuvB hexamer assembles on each DNA strand where it exits the tetramer. Each RuvB hexamer is contacted by two RuvA subunits (via domain III) on 2 adjacent RuvB subunits; this complex drives branch migration. In the full resolvosome a probable DNA-RuvA(4)-RuvB(12)-RuvC(2) complex forms which resolves the HJ.

The protein resides in the cytoplasm. It carries out the reaction ATP + H2O = ADP + phosphate + H(+). Functionally, the RuvA-RuvB-RuvC complex processes Holliday junction (HJ) DNA during genetic recombination and DNA repair, while the RuvA-RuvB complex plays an important role in the rescue of blocked DNA replication forks via replication fork reversal (RFR). RuvA specifically binds to HJ cruciform DNA, conferring on it an open structure. The RuvB hexamer acts as an ATP-dependent pump, pulling dsDNA into and through the RuvAB complex. RuvB forms 2 homohexamers on either side of HJ DNA bound by 1 or 2 RuvA tetramers; 4 subunits per hexamer contact DNA at a time. Coordinated motions by a converter formed by DNA-disengaged RuvB subunits stimulates ATP hydrolysis and nucleotide exchange. Immobilization of the converter enables RuvB to convert the ATP-contained energy into a lever motion, pulling 2 nucleotides of DNA out of the RuvA tetramer per ATP hydrolyzed, thus driving DNA branch migration. The RuvB motors rotate together with the DNA substrate, which together with the progressing nucleotide cycle form the mechanistic basis for DNA recombination by continuous HJ branch migration. Branch migration allows RuvC to scan DNA until it finds its consensus sequence, where it cleaves and resolves cruciform DNA. This chain is Holliday junction branch migration complex subunit RuvB, found in Anaplasma marginale (strain Florida).